The chain runs to 133 residues: Putative esterase STK_17900 (133 aa).

Belongs to the thioesterase PaaI family.

The polypeptide is Putative esterase STK_17900 (Sulfurisphaera tokodaii (strain DSM 16993 / JCM 10545 / NBRC 100140 / 7) (Sulfolobus tokodaii)).